We begin with the raw amino-acid sequence, 432 residues long: Bouquet formation protein 4 (432 aa).

The disordered stretch occupies residues 1 to 21; that stretch reads MTENEKSRSLPAERNPLYKDD. One can recognise an HTH APSES-type domain in the interval 38-147; it reads EFPDGPATFV…SSTPSTYATP (110 aa). Positions 73–94 form a DNA-binding region, H-T-H motif; sequence ATSMFRSAFPKATQEEEDLEMR. 2 stretches are compositionally biased toward low complexity: residues 139–152 and 163–172; these read STPS…RPTA and ESSTSATTTS. Disordered regions lie at residues 139–283 and 364–384; these read STPS…GKIR and KSSI…FEEN. Residues 180-228 are compositionally biased toward basic and acidic residues; sequence RLAEHLENSKKTILQHDNKEEDKEIHSEENETKDEIKSEKKEPEIKKQE. A compositionally biased stretch (polar residues) spans 229–241; the sequence is GGSSTEKVGQPSS.

As to quaternary structure, interacts with rap1.

Its subcellular location is the cytoplasm. The protein localises to the nucleus. It is found in the nucleus inner membrane. Functionally, connects telomeres to the nuclear envelop (NE) during both vegetative growth and meiosis. This connection ensures clustering of telomeres to the spindle pole body (SPB) when cells enter meiotic prophase. The chain is Bouquet formation protein 4 (bqt4) from Schizosaccharomyces pombe (strain 972 / ATCC 24843) (Fission yeast).